Consider the following 285-residue polypeptide: CCR4-NOT transcription complex subunit 7 (285 aa).

A divalent metal cation-binding residues include Asp-40, Glu-42, Asp-161, Asp-230, and Glu-278.

It belongs to the CAF1 family. As to quaternary structure, component of the CCR4-NOT complex; distinct complexes seem to exist that differ in the participation of probably mutually exclusive catalytic subunits; the complex contains two deadenylase subunits, CNOT6 or CNOT6L, and CNOT7 or CNOT8. In the complex, interacts directly with CNOT1. Interacts with AGO2. Interacts with TOB1; recruited by TOB1 to a ternary complex with CPEB3 which is required for mRNA deadenylation and decay. Interacts with BTG1. Interacts with BTG2. Interacts with NANOS2. Interacts with ZFP36, ZFP36L1 and ZFP36L2; these interactions are inhibited in response to phorbol 12-myristate 13-acetate (PMA) treatment in a p38 MAPK-dependent manner. Interacts with BTG4. Interacts with EIF4E; this interaction is increased by CNOT7 interaction with BTG4. The cofactor is Mn(2+). Mg(2+) serves as cofactor. Requires Co(2+) as cofactor.

It is found in the nucleus. The protein localises to the cytoplasm. The protein resides in the P-body. It localises to the cytoplasmic ribonucleoprotein granule. The catalysed reaction is Exonucleolytic cleavage of poly(A) to 5'-AMP.. Has 3'-5' poly(A) exoribonuclease activity for synthetic poly(A) RNA substrate. Its function seems to be partially redundant with that of CNOT8. Catalytic component of the CCR4-NOT complex which is one of the major cellular mRNA deadenylases and is linked to various cellular processes including bulk mRNA degradation, miRNA-mediated repression, translational repression during translational initiation and general transcription regulation. During miRNA-mediated repression the complex also seems to act as translational repressor during translational initiation. Additional complex functions may be a consequence of its influence on mRNA expression. Required for miRNA-mediated mRNA deadenylation. Associates with members of the BTG family such as TOB1 and BTG2 and is required for their anti-proliferative activity. This Bos taurus (Bovine) protein is CCR4-NOT transcription complex subunit 7 (CNOT7).